The chain runs to 240 residues: Ubiquinone biosynthesis O-methyltransferase (240 aa).

S-adenosyl-L-methionine is bound by residues Arg44, Gly64, Asp85, and Met129.

Belongs to the methyltransferase superfamily. UbiG/COQ3 family.

The catalysed reaction is a 3-demethylubiquinol + S-adenosyl-L-methionine = a ubiquinol + S-adenosyl-L-homocysteine + H(+). The enzyme catalyses a 3-(all-trans-polyprenyl)benzene-1,2-diol + S-adenosyl-L-methionine = a 2-methoxy-6-(all-trans-polyprenyl)phenol + S-adenosyl-L-homocysteine + H(+). Its pathway is cofactor biosynthesis; ubiquinone biosynthesis. O-methyltransferase that catalyzes the 2 O-methylation steps in the ubiquinone biosynthetic pathway. This Escherichia fergusonii (strain ATCC 35469 / DSM 13698 / CCUG 18766 / IAM 14443 / JCM 21226 / LMG 7866 / NBRC 102419 / NCTC 12128 / CDC 0568-73) protein is Ubiquinone biosynthesis O-methyltransferase.